We begin with the raw amino-acid sequence, 529 residues long: Bifunctional purine biosynthesis protein PurH (529 aa).

Residues 1-148 (MQQRRPVRRA…KNHKDVAIVV (148 aa)) form the MGS-like domain.

This sequence belongs to the PurH family.

The enzyme catalyses (6R)-10-formyltetrahydrofolate + 5-amino-1-(5-phospho-beta-D-ribosyl)imidazole-4-carboxamide = 5-formamido-1-(5-phospho-D-ribosyl)imidazole-4-carboxamide + (6S)-5,6,7,8-tetrahydrofolate. The catalysed reaction is IMP + H2O = 5-formamido-1-(5-phospho-D-ribosyl)imidazole-4-carboxamide. It functions in the pathway purine metabolism; IMP biosynthesis via de novo pathway; 5-formamido-1-(5-phospho-D-ribosyl)imidazole-4-carboxamide from 5-amino-1-(5-phospho-D-ribosyl)imidazole-4-carboxamide (10-formyl THF route): step 1/1. Its pathway is purine metabolism; IMP biosynthesis via de novo pathway; IMP from 5-formamido-1-(5-phospho-D-ribosyl)imidazole-4-carboxamide: step 1/1. The polypeptide is Bifunctional purine biosynthesis protein PurH (Salmonella agona (strain SL483)).